A 205-amino-acid chain; its full sequence is Transcriptional regulator GfcR (205 aa).

Belongs to the purine/pyrimidine phosphoribosyltransferase family. GfcR subfamily.

This Methanococcus maripaludis (strain C7 / ATCC BAA-1331) protein is Transcriptional regulator GfcR.